Consider the following 144-residue polypeptide: Large ribosomal subunit protein uL15 (144 aa).

Positions 1–53 (MRLNTLSPAVGAKSAPKRVGRGIGSGLGKTAGRGHKGQKSRSGGGVRPGFEGG) are disordered. Gly residues-rich tracts occupy residues 21–31 (RGIGSGLGKTA) and 42–52 (SGGGVRPGFEG).

Belongs to the universal ribosomal protein uL15 family. Part of the 50S ribosomal subunit.

Binds to the 23S rRNA. The polypeptide is Large ribosomal subunit protein uL15 (Shewanella amazonensis (strain ATCC BAA-1098 / SB2B)).